Here is a 492-residue protein sequence, read N- to C-terminus: Transmembrane protein 39B (492 aa).

The segment at 1–54 (MGGRRGPNRTSYCRNPLCEPGSSGGSSGSHTSSASVTSVRSRTRSSSGTGLSSP) is disordered. An N-linked (GlcNAc...) asparagine glycan is attached at asparagine 8. A compositionally biased stretch (low complexity) spans 28-53 (GSHTSSASVTSVRSRTRSSSGTGLSS). Transmembrane regions (helical) follow at residues 77-97 (SILF…VHYI), 115-135 (TSLN…IVLG), 153-175 (SLFR…GWSL), 185-205 (TYSF…IPFL), 288-308 (EVLV…VWFV), 322-342 (LFLL…LPAS), 421-441 (ILNI…YSLM), and 447-467 (HQTI…FKLL).

This sequence belongs to the TMEM39 family.

The protein localises to the endoplasmic reticulum membrane. Functionally, may protect the cells against DNA damage caused by exposure to the cold-warming stress and facilitates tissue damage repair during the recovery phase. The protein is Transmembrane protein 39B of Homo sapiens (Human).